Reading from the N-terminus, the 459-residue chain is Vacuolar cation/proton exchanger 3 (459 aa).

At 1–67 (MGSIVEPWAA…TLKNILSNLQ (67 aa)) the chain is on the cytoplasmic side. The chain crosses the membrane as a helical span at residues 68-88 (EVILGTKLTLLFLAIPLAILA). The Extracellular portion of the chain corresponds to 89–95 (NSYNYGR). Residues 96-116 (PLIFGLSLIGLTPLAERVSFL) traverse the membrane as a helical segment. At 117–129 (TEQLAFYTGPTVG) the chain is on the cytoplasmic side. The chain crosses the membrane as a helical span at residues 130-150 (GLLNATCGNATELIIAILALA). The segment at 137-172 (GNATELIIAILALANNKVAVVKYSLLGSILSNLLLV) is cation selection. The Extracellular segment spans residues 151 to 161 (NNKVAVVKYSL). Residues 162–182 (LGSILSNLLLVLGTSLFFGGI) form a helical membrane-spanning segment. The Cytoplasmic portion of the chain corresponds to 183–195 (ANIRREQRFDRKQ). A helical membrane pass occupies residues 196-216 (ADVNFFLLLMGLLCHLLPLLL). Residues 217-238 (KYAATGEVSTSMINKMSLTLSR) lie on the Extracellular side of the membrane. A helical membrane pass occupies residues 239–259 (TSSIVMLIAYIAYLIFQLWTH). The Cytoplasmic portion of the chain corresponds to 260-283 (RQLFEAQQDDDDAYDDEVSVEETP). A helical membrane pass occupies residues 284 to 304 (VIGFWSGFAWLVGMTIVIALL). The Extracellular portion of the chain corresponds to 305 to 327 (SEYVVDTIEDASDSWGLSVSFIS). A helical membrane pass occupies residues 328–348 (IILLPIVGNAAEHAGAIIFAF). Residues 335–370 (GNAAEHAGAIIFAFKNKLDISLGVALGSATQISLFV) form a cation selection region. Over 349-362 (KNKLDISLGVALGS) the chain is Cytoplasmic. The helical transmembrane segment at 363–383 (ATQISLFVVPLSVIVAWILGI) threads the bilayer. Residues 384–386 (KMD) are Extracellular-facing. The chain crosses the membrane as a helical span at residues 387–407 (LNFNILETSSLALAIIITAFT). The Cytoplasmic segment spans residues 408 to 417 (LQDGTSHYMK). Residues 418 to 438 (GLVLLLCYVIIAACFFVDQIP) traverse the membrane as a helical segment. Topologically, residues 439 to 459 (QPNDLDVGLQPMNNLGEVFSA) are extracellular.

This sequence belongs to the Ca(2+):cation antiporter (CaCA) (TC 2.A.19) family. Cation/proton exchanger (CAX) subfamily. In terms of tissue distribution, expressed in roots, stems and flowers.

The protein resides in the vacuole membrane. Inhibited by excess of Ca(2+). In terms of biological role, vacuolar cation/proton exchanger (CAX). Translocates Ca(2+) and other metal ions into vacuoles using the proton gradient formed by H(+)-ATPase and H(+)-pyrophosphatase. Involved in ion homeostasis in association with CAX1. This is Vacuolar cation/proton exchanger 3 (CAX3) from Arabidopsis thaliana (Mouse-ear cress).